The primary structure comprises 92 residues: uncharacterized protein (92 aa).

This is an uncharacterized protein from Haemophilus influenzae (strain ATCC 51907 / DSM 11121 / KW20 / Rd).